The following is a 162-amino-acid chain: Large ribosomal subunit protein uL10 (162 aa).

It belongs to the universal ribosomal protein uL10 family. In terms of assembly, part of the ribosomal stalk of the 50S ribosomal subunit. The N-terminus interacts with L11 and the large rRNA to form the base of the stalk. The C-terminus forms an elongated spine to which L12 dimers bind in a sequential fashion forming a multimeric L10(L12)X complex.

Its function is as follows. Forms part of the ribosomal stalk, playing a central role in the interaction of the ribosome with GTP-bound translation factors. The chain is Large ribosomal subunit protein uL10 from Borrelia garinii subsp. bavariensis (strain ATCC BAA-2496 / DSM 23469 / PBi) (Borreliella bavariensis).